Here is a 347-residue protein sequence, read N- to C-terminus: KIN17-like protein KLP (347 aa).

A Nuclear localization signal (NLS) motif is present at residues 222 to 225; it reads KRKR.

The protein belongs to the KIN17 family.

It is found in the cytoplasm. The protein resides in the nucleus. In terms of biological role, may act as repressor of root growth during copper excess and of hypocotyl growth in the dark. This is KIN17-like protein KLP from Arabidopsis thaliana (Mouse-ear cress).